The following is a 189-amino-acid chain: uncharacterized protein (189 aa).

A signal peptide spans 1 to 19; that stretch reads MNKLTILFLILALISVIYA. Positions 24-189 are disordered; that stretch reads PSSSEDSSSN…GSGSSGTVYY (166 aa). Low complexity predominate over residues 25–69; the sequence is SSSEDSSSNDSNSQVTGSQSYSGSQSDSNSGSESHTINTGSSYSG. Residues 70–101 are compositionally biased toward gly residues; sequence SGSGSSGISGGSGSGSGSGSGSGSGSGSGSGA. Positions 102–142 are enriched in low complexity; sequence VSGSQSGSGAVSGSQSGSGAVSGSQSGVQTGSQSGAGSASG. Positions 144–157 are enriched in polar residues; the sequence is FTGNPSGSQSQEIN. Over residues 165–183 the composition is skewed to gly residues; the sequence is SGSGAPTGAATGSGSGSGS.

This is an uncharacterized protein from Dictyostelium discoideum (Social amoeba).